Consider the following 337-residue polypeptide: UDP-3-O-acylglucosamine N-acyltransferase (337 aa).

The Proton acceptor role is filled by His-238.

The protein belongs to the transferase hexapeptide repeat family. LpxD subfamily. In terms of assembly, homotrimer.

It carries out the reaction a UDP-3-O-[(3R)-3-hydroxyacyl]-alpha-D-glucosamine + a (3R)-hydroxyacyl-[ACP] = a UDP-2-N,3-O-bis[(3R)-3-hydroxyacyl]-alpha-D-glucosamine + holo-[ACP] + H(+). Its pathway is bacterial outer membrane biogenesis; LPS lipid A biosynthesis. Functionally, catalyzes the N-acylation of UDP-3-O-acylglucosamine using 3-hydroxyacyl-ACP as the acyl donor. Is involved in the biosynthesis of lipid A, a phosphorylated glycolipid that anchors the lipopolysaccharide to the outer membrane of the cell. This Xanthomonas axonopodis pv. citri (strain 306) protein is UDP-3-O-acylglucosamine N-acyltransferase.